The following is a 464-amino-acid chain: UDP-N-acetylmuramoylalanine--D-glutamate ligase (464 aa).

ATP is bound at residue 127-133; it reads GSNGKST.

This sequence belongs to the MurCDEF family.

Its subcellular location is the cytoplasm. The enzyme catalyses UDP-N-acetyl-alpha-D-muramoyl-L-alanine + D-glutamate + ATP = UDP-N-acetyl-alpha-D-muramoyl-L-alanyl-D-glutamate + ADP + phosphate + H(+). It participates in cell wall biogenesis; peptidoglycan biosynthesis. Cell wall formation. Catalyzes the addition of glutamate to the nucleotide precursor UDP-N-acetylmuramoyl-L-alanine (UMA). The polypeptide is UDP-N-acetylmuramoylalanine--D-glutamate ligase (Roseobacter denitrificans (strain ATCC 33942 / OCh 114) (Erythrobacter sp. (strain OCh 114))).